Here is a 487-residue protein sequence, read N- to C-terminus: Cysteine--tRNA ligase (487 aa).

C29 is a binding site for Zn(2+). The short motif at 31 to 41 (VTVYDFCHIGH) is the 'HIGH' region element. Zn(2+) is bound by residues C209, H234, and E238. Residues 266-270 (KMSKS) carry the 'KMSKS' region motif. Position 269 (K269) interacts with ATP.

It belongs to the class-I aminoacyl-tRNA synthetase family. Monomer. Zn(2+) is required as a cofactor.

The protein resides in the cytoplasm. It carries out the reaction tRNA(Cys) + L-cysteine + ATP = L-cysteinyl-tRNA(Cys) + AMP + diphosphate. The polypeptide is Cysteine--tRNA ligase (Trichlorobacter lovleyi (strain ATCC BAA-1151 / DSM 17278 / SZ) (Geobacter lovleyi)).